Reading from the N-terminus, the 296-residue chain is Calponin-2 (296 aa).

The residue at position 2 (Ser2) is an N-acetylserine. An N6-acetyllysine mark is found at Lys8 and Lys25. In terms of domain architecture, Calponin-homology (CH) spans Pro28–Lys132. Ser138 carries the post-translational modification Phosphoserine. Calponin-like repeat units lie at residues Ile166–Tyr191, Ile206–Tyr231, and Met245–Tyr269. The interval Pro275–Ser296 is disordered.

It belongs to the calponin family. In terms of tissue distribution, smooth muscle, and tissues containing significant amounts of smooth muscle.

In terms of biological role, thin filament-associated protein that is implicated in the regulation and modulation of smooth muscle contraction. It is capable of binding to actin, calmodulin and tropomyosin. The interaction of calponin with actin inhibits the actomyosin Mg-ATPase activity. The sequence is that of Calponin-2 (CNN2) from Sus scrofa (Pig).